Reading from the N-terminus, the 215-residue chain is Meiotic chromosome segregation protein P8B7.28c (215 aa).

Positions 159–202 (TINSEYADDVSDNTDEERTESKGQQESNSAEEYDDDDSDEDRME) are disordered. Composition is skewed to acidic residues over residues 164 to 176 (YADD…DEER) and 187 to 201 (SAEE…EDRM).

The protein resides in the nucleus. The protein localises to the nucleolus. Its function is as follows. Required for meiotic chromosome segregation. The chain is Meiotic chromosome segregation protein P8B7.28c from Schizosaccharomyces pombe (strain 972 / ATCC 24843) (Fission yeast).